A 40-amino-acid polypeptide reads, in one-letter code: Photosystem II reaction center protein J (40 aa).

A helical transmembrane segment spans residues 8-28 (IPLWIVGTVTGILVIGLIGVF).

Belongs to the PsbJ family. PSII is composed of 1 copy each of membrane proteins PsbA, PsbB, PsbC, PsbD, PsbE, PsbF, PsbH, PsbI, PsbJ, PsbK, PsbL, PsbM, PsbT, PsbX, PsbY, PsbZ, Psb30/Ycf12, at least 3 peripheral proteins of the oxygen-evolving complex and a large number of cofactors. It forms dimeric complexes.

The protein localises to the plastid. It localises to the chloroplast thylakoid membrane. One of the components of the core complex of photosystem II (PSII). PSII is a light-driven water:plastoquinone oxidoreductase that uses light energy to abstract electrons from H(2)O, generating O(2) and a proton gradient subsequently used for ATP formation. It consists of a core antenna complex that captures photons, and an electron transfer chain that converts photonic excitation into a charge separation. The protein is Photosystem II reaction center protein J of Coffea arabica (Arabian coffee).